The following is a 1035-amino-acid chain: Ephrin type-A receptor 6 (1035 aa).

A signal peptide spans 1-22 (MGGCEVREFLLQFGFFLPLLTA). Topologically, residues 23–549 (WTGDCSHVSN…MAAEQGQILV (527 aa)) are extracellular. Residues 33–211 (QVVLLDTSTV…FYKKCPFTVR (179 aa)) enclose the Eph LBD domain. Fibronectin type-III domains lie at 330 to 440 (PPSA…TDQD) and 441 to 536 (APSL…TGDE). Residues Asn-342, Asn-396, and Asn-409 are each glycosylated (N-linked (GlcNAc...) asparagine). The helical transmembrane segment at 550-570 (IATAAVGGFTLLVILTLFFLI) threads the bilayer. Residues 571–1035 (TGRCQWYIKA…MHIQEKGFHV (465 aa)) lie on the Cytoplasmic side of the membrane. Tyr-605 and Tyr-611 each carry phosphotyrosine; by autocatalysis. In terms of domain architecture, Protein kinase spans 630–943 (IRIERVIGAG…RNPSALHTLV (314 aa)). ATP is bound by residues 636-644 (IGAGEFGEV) and Lys-662. Asp-797 (proton acceptor) is an active-site residue. Phosphotyrosine; by autocatalysis is present on residues Tyr-830 and Tyr-977. An SAM domain is found at 960–1024 (PLFVTVGDWL…VSSIQTLRLH (65 aa)). Positions 1033 to 1035 (FHV) match the PDZ-binding motif.

Belongs to the protein kinase superfamily. Tyr protein kinase family. Ephrin receptor subfamily. Heterotetramer upon binding of the ligand. The heterotetramer is composed of an ephrin dimer and a receptor dimer. Oligomerization is probably required to induce biological responses. Interacts (via SAM domain) with ANKS1A (via SAM domain). As to expression, brain.

Its subcellular location is the membrane. The enzyme catalyses L-tyrosyl-[protein] + ATP = O-phospho-L-tyrosyl-[protein] + ADP + H(+). Receptor tyrosine kinase which binds promiscuously GPI-anchored ephrin-A family ligands residing on adjacent cells, leading to contact-dependent bidirectional signaling into neighboring cells. The signaling pathway downstream of the receptor is referred to as forward signaling while the signaling pathway downstream of the ephrin ligand is referred to as reverse signaling. The chain is Ephrin type-A receptor 6 (Epha6) from Rattus norvegicus (Rat).